Reading from the N-terminus, the 188-residue chain is UPF0340 protein SSU98_0310 (188 aa).

Belongs to the UPF0340 family.

This chain is UPF0340 protein SSU98_0310, found in Streptococcus suis (strain 98HAH33).